The following is a 116-amino-acid chain: Protein Rev (116 aa).

Position 5 is a phosphoserine; by host CK2 (S5). The homomultimerization stretch occupies residues 18–26 (YIKILYQSN). Residues 34-50 (TRKARRNRRRRWRARQR) carry the Nuclear localization signal and RNA-binding (RRE) motif. Residues 73–84 (LQLPLLEKLHIN) carry the Nuclear export signal and binding to XPO1 motif. The disordered stretch occupies residues 90 to 116 (GQGTEKGVGSPQISVESRAVLGSGTKE). A Phosphoserine; by host modification is found at S99.

It belongs to the HIV-1 REV protein family. Homomultimer; when bound to the RRE. Multimeric assembly is essential for activity and may involve XPO1. Binds to human KPNB1, XPO1, TNPO1, RANBP5 and IPO7. Interacts with the viral Integrase. Interacts with human KHDRBS1. Interacts with human NAP1; this interaction decreases Rev multimerization and stimulates its activity. Interacts with human DEAD-box helicases DDX3 and DDX24; these interactions may serve for viral RNA export to the cytoplasm and packaging, respectively. Interacts with human PSIP1; this interaction may inhibit HIV-1 DNA integration by promoting dissociation of the Integrase-LEDGF/p75 complex. Post-translationally, asymmetrically arginine dimethylated at one site by host PRMT6. Methylation impairs the RNA-binding activity and export of viral RNA from the nucleus to the cytoplasm. Phosphorylated by protein kinase CK2. Presence of, and maybe binding to the N-terminus of the regulatory beta subunit of CK2 is necessary for CK2-mediated Rev's phosphorylation.

The protein resides in the host nucleus. Its subcellular location is the host nucleolus. It localises to the host cytoplasm. Its function is as follows. Escorts unspliced or incompletely spliced viral pre-mRNAs (late transcripts) out of the nucleus of infected cells. These pre-mRNAs carry a recognition sequence called Rev responsive element (RRE) located in the env gene, that is not present in fully spliced viral mRNAs (early transcripts). This function is essential since most viral proteins are translated from unspliced or partially spliced pre-mRNAs which cannot exit the nucleus by the pathway used by fully processed cellular mRNAs. Rev itself is translated from a fully spliced mRNA that readily exits the nucleus. Rev's nuclear localization signal (NLS) binds directly to KPNB1/Importin beta-1 without previous binding to KPNA1/Importin alpha-1. KPNB1 binds to the GDP bound form of RAN (Ran-GDP) and targets Rev to the nucleus. In the nucleus, the conversion from Ran-GDP to Ran-GTP dissociates Rev from KPNB1 and allows Rev's binding to the RRE in viral pre-mRNAs. Rev multimerization on the RRE via cooperative assembly exposes its nuclear export signal (NES) to the surface. Rev can then form a complex with XPO1/CRM1 and Ran-GTP, leading to nuclear export of the complex. Conversion from Ran-GTP to Ran-GDP mediates dissociation of the Rev/RRE/XPO1/RAN complex, so that Rev can return to the nucleus for a subsequent round of export. Beside KPNB1, also seems to interact with TNPO1/Transportin-1, RANBP5/IPO5 and IPO7/RANBP7 for nuclear import. The nucleoporin-like HRB/RIP is an essential cofactor that probably indirectly interacts with Rev to release HIV RNAs from the perinuclear region to the cytoplasm. This Human immunodeficiency virus type 1 group M subtype F2 (isolate MP257) (HIV-1) protein is Protein Rev.